Reading from the N-terminus, the 241-residue chain is LexA repressor (241 aa).

The H-T-H motif DNA-binding region spans 41–61; that stretch reads FREIGNAAGLKSPSSVKHQLQ. Active-site for autocatalytic cleavage activity residues include serine 165 and lysine 202.

Belongs to the peptidase S24 family. As to quaternary structure, homodimer.

The enzyme catalyses Hydrolysis of Ala-|-Gly bond in repressor LexA.. In terms of biological role, represses a number of genes involved in the response to DNA damage (SOS response), including recA and lexA. In the presence of single-stranded DNA, RecA interacts with LexA causing an autocatalytic cleavage which disrupts the DNA-binding part of LexA, leading to derepression of the SOS regulon and eventually DNA repair. The sequence is that of LexA repressor from Bifidobacterium longum (strain DJO10A).